Here is a 264-residue protein sequence, read N- to C-terminus: MRQYLQLLEDILENGVEKEDRTGVGTLSVFGRQLRFNLQDGFPLVTTKKLHIRSIIYELLWFLKGDTNVRYLQENGVTIWDEWADENGDLGPIYGAQWRSWKGADGKTIDQIAWVVEEIKRNPNSRRLLVSAWNVAELDEMKLPPCHYAFQFYVANGRLSCMWQQRSVDTFLGLPFNIASYALLTHMIAQQCDLDVGELIFTGGDVHLYKNHLEQAKLQLTREPRPLPKLVIKRKPPSIFDYEYDDFEIVGYNPHPTIKAPVAV.

DUMP is bound at residue Arg-21. His-51 serves as a coordination point for (6R)-5,10-methylene-5,6,7,8-tetrahydrofolate. 126–127 (RR) contributes to the dUMP binding site. Cys-146 serves as the catalytic Nucleophile. DUMP is bound by residues 166 to 169 (RSVD), Asn-177, and 207 to 209 (HLY). Residue Asp-169 coordinates (6R)-5,10-methylene-5,6,7,8-tetrahydrofolate. Ala-263 lines the (6R)-5,10-methylene-5,6,7,8-tetrahydrofolate pocket.

This sequence belongs to the thymidylate synthase family. Bacterial-type ThyA subfamily. In terms of assembly, homodimer.

The protein localises to the cytoplasm. It catalyses the reaction dUMP + (6R)-5,10-methylene-5,6,7,8-tetrahydrofolate = 7,8-dihydrofolate + dTMP. It participates in pyrimidine metabolism; dTTP biosynthesis. Functionally, catalyzes the reductive methylation of 2'-deoxyuridine-5'-monophosphate (dUMP) to 2'-deoxythymidine-5'-monophosphate (dTMP) while utilizing 5,10-methylenetetrahydrofolate (mTHF) as the methyl donor and reductant in the reaction, yielding dihydrofolate (DHF) as a by-product. This enzymatic reaction provides an intracellular de novo source of dTMP, an essential precursor for DNA biosynthesis. In Geobacillus kaustophilus (strain HTA426), this protein is Thymidylate synthase.